We begin with the raw amino-acid sequence, 353 residues long: Phosphate acyltransferase (353 aa).

Belongs to the PlsX family. In terms of assembly, homodimer. Probably interacts with PlsY.

It localises to the cytoplasm. It catalyses the reaction a fatty acyl-[ACP] + phosphate = an acyl phosphate + holo-[ACP]. Its pathway is lipid metabolism; phospholipid metabolism. In terms of biological role, catalyzes the reversible formation of acyl-phosphate (acyl-PO(4)) from acyl-[acyl-carrier-protein] (acyl-ACP). This enzyme utilizes acyl-ACP as fatty acyl donor, but not acyl-CoA. In Bradyrhizobium diazoefficiens (strain JCM 10833 / BCRC 13528 / IAM 13628 / NBRC 14792 / USDA 110), this protein is Phosphate acyltransferase.